The sequence spans 328 residues: Biotin synthase (328 aa).

The Radical SAM core domain maps to 49-273 (FNKEKIETCS…ICISRIIMPE (225 aa)). Residues Cys67, Cys71, and Cys74 each contribute to the [4Fe-4S] cluster site. Residues Ser110, Cys142, Cys201, and Arg277 each coordinate [2Fe-2S] cluster.

The protein belongs to the radical SAM superfamily. Biotin synthase family. In terms of assembly, homodimer. It depends on [4Fe-4S] cluster as a cofactor. [2Fe-2S] cluster serves as cofactor.

It catalyses the reaction (4R,5S)-dethiobiotin + (sulfur carrier)-SH + 2 reduced [2Fe-2S]-[ferredoxin] + 2 S-adenosyl-L-methionine = (sulfur carrier)-H + biotin + 2 5'-deoxyadenosine + 2 L-methionine + 2 oxidized [2Fe-2S]-[ferredoxin]. Its pathway is cofactor biosynthesis; biotin biosynthesis; biotin from 7,8-diaminononanoate: step 2/2. Catalyzes the conversion of dethiobiotin (DTB) to biotin by the insertion of a sulfur atom into dethiobiotin via a radical-based mechanism. This Methanococcus vannielii (strain ATCC 35089 / DSM 1224 / JCM 13029 / OCM 148 / SB) protein is Biotin synthase.